A 1050-amino-acid polypeptide reads, in one-letter code: Probable E3 ubiquitin-protein ligase HERC3 (1050 aa).

7 RCC1 repeats span residues 1–51, 52–101, 102–154, 156–207, 208–259, 261–311, and 313–366; these read MLCW…FLLE, DGEV…ALSD, RGQL…ALAA, GQFF…ALSL, SGAV…VLTK, GGVF…AFVP, and SGLI…IVKQ. The 100-residue stretch at 951–1050 folds into the HECT domain; sequence YKGDYSATHP…LDNYEGFSLA (100 aa). The Glycyl thioester intermediate role is filled by Cys1018.

Ubiquitinated; which promotes degradation by the proteasome.

The protein resides in the cytoplasm. It is found in the cytoplasmic vesicle. The catalysed reaction is S-ubiquitinyl-[E2 ubiquitin-conjugating enzyme]-L-cysteine + [acceptor protein]-L-lysine = [E2 ubiquitin-conjugating enzyme]-L-cysteine + N(6)-ubiquitinyl-[acceptor protein]-L-lysine.. Its pathway is protein modification; protein ubiquitination. E3 ubiquitin-protein ligase which accepts ubiquitin from an E2 ubiquitin-conjugating enzyme in the form of a thioester and then directly transfers the ubiquitin to targeted substrates. The protein is Probable E3 ubiquitin-protein ligase HERC3 (HERC3) of Homo sapiens (Human).